The sequence spans 356 residues: Protein RecA (356 aa).

G67 to T74 is an ATP binding site.

The protein belongs to the RecA family.

It is found in the cytoplasm. Its function is as follows. Can catalyze the hydrolysis of ATP in the presence of single-stranded DNA, the ATP-dependent uptake of single-stranded DNA by duplex DNA, and the ATP-dependent hybridization of homologous single-stranded DNAs. It interacts with LexA causing its activation and leading to its autocatalytic cleavage. This Yersinia pestis (strain Pestoides F) protein is Protein RecA.